We begin with the raw amino-acid sequence, 633 residues long: Chaperone protein HtpG (633 aa).

Residues 1-344 (MSLQPQAETL…SNDLPLNISR (344 aa)) are a; substrate-binding. The tract at residues 345 to 560 (ELLQSNEVIN…ENEMSGHLQR (216 aa)) is b. The interval 561 to 633 (LLIQTGQDFM…KGLNELLLDS (73 aa)) is c.

This sequence belongs to the heat shock protein 90 family. In terms of assembly, homodimer.

Its subcellular location is the cytoplasm. In terms of biological role, molecular chaperone. Has ATPase activity. This Coxiella burnetii (strain RSA 331 / Henzerling II) protein is Chaperone protein HtpG.